The following is a 99-amino-acid chain: MNDSAFKKIGNVLKDYLESNLLVNKKISSKLLIADKWNQIFEALSDDVKFLDFKNEQILFLEVSNSSILCSIAINKSKIINSVKELTGIKIIDIKVLVR.

This is an uncharacterized protein from Borreliella burgdorferi (strain ATCC 35210 / DSM 4680 / CIP 102532 / B31) (Borrelia burgdorferi).